The primary structure comprises 202 residues: Small ribosomal subunit protein uS4c (202 aa).

Residues 89–152 (MRLDNIIFRL…QSNTFINNCI (64 aa)) form the S4 RNA-binding domain.

The protein belongs to the universal ribosomal protein uS4 family. As to quaternary structure, part of the 30S ribosomal subunit. Contacts protein S5. The interaction surface between S4 and S5 is involved in control of translational fidelity.

The protein localises to the plastid. Functionally, one of the primary rRNA binding proteins, it binds directly to 16S rRNA where it nucleates assembly of the body of the 30S subunit. In terms of biological role, with S5 and S12 plays an important role in translational accuracy. This chain is Small ribosomal subunit protein uS4c (rps4), found in Epifagus virginiana (Beechdrops).